We begin with the raw amino-acid sequence, 370 residues long: N-acyl-L-amino acid amidohydrolase (370 aa).

This sequence belongs to the peptidase M20 family. Homotetramer. The cofactor is Co(2+).

It catalyses the reaction an N-acyl-L-amino acid + H2O = an L-alpha-amino acid + a carboxylate. The catalysed reaction is an N-acetyl-L-cysteine-S-conjugate + H2O = an S-substituted L-cysteine + acetate. Its function is as follows. Hydrolyzes most efficiently N-acetyl derivatives of aromatic amino acids but is also active on other amino acids. L-stereospecific. The protein is N-acyl-L-amino acid amidohydrolase (amaA) of Geobacillus stearothermophilus (Bacillus stearothermophilus).